We begin with the raw amino-acid sequence, 592 residues long: NADH-ubiquinone oxidoreductase chain 5 (592 aa).

14 helical membrane-spanning segments follow: residues 36-56 (LSMV…IYAI), 68-88 (FYII…SDNY), 89-109 (IMMF…ISFW), 132-152 (LFVI…FETM), 169-189 (MMLL…GWLL), 196-216 (TPVS…FVLV), 229-249 (LLVM…MAVV), 256-276 (VMAL…GSSA), 279-299 (LAMY…MSAG), 322-342 (LPFS…MPGL), 364-386 (YIMY…RVTY), 406-426 (STHM…LGYA), 451-471 (LPAM…LTTV), and 534-554 (ALIN…IVFF).

The protein belongs to the complex I subunit 5 family.

Its subcellular location is the mitochondrion inner membrane. It catalyses the reaction a ubiquinone + NADH + 5 H(+)(in) = a ubiquinol + NAD(+) + 4 H(+)(out). Functionally, core subunit of the mitochondrial membrane respiratory chain NADH dehydrogenase (Complex I) that is believed to belong to the minimal assembly required for catalysis. Complex I functions in the transfer of electrons from NADH to the respiratory chain. The immediate electron acceptor for the enzyme is believed to be ubiquinone. The protein is NADH-ubiquinone oxidoreductase chain 5 (ND5) of Debaryomyces hansenii (strain ATCC 36239 / CBS 767 / BCRC 21394 / JCM 1990 / NBRC 0083 / IGC 2968) (Yeast).